Reading from the N-terminus, the 396-residue chain is 2-(3-amino-3-carboxypropyl)histidine synthase subunit 1 (396 aa).

Residues Cys-89, Cys-194, and Cys-323 each coordinate [4Fe-4S] cluster. The disordered stretch occupies residues 372-396; sequence TNNNEANRPKREKRKPHIVVRTEAS.

The protein belongs to the DPH1/DPH2 family. DPH1 subfamily. In terms of assembly, component of the 2-(3-amino-3-carboxypropyl)histidine synthase complex composed of dph-1, dph-2, dph-3 and a NADH-dependent reductase. The cofactor is [4Fe-4S] cluster.

It carries out the reaction L-histidyl-[translation elongation factor 2] + S-adenosyl-L-methionine = 2-[(3S)-amino-3-carboxypropyl]-L-histidyl-[translation elongation factor 2] + S-methyl-5'-thioadenosine + H(+). It functions in the pathway protein modification; peptidyl-diphthamide biosynthesis. Its function is as follows. Catalyzes the first step of diphthamide biosynthesis, a post-translational modification of histidine which occurs in elongation factor 2. Dph-1 and dph-2 transfer a 3-amino-3-carboxypropyl (ACP) group from S-adenosyl-L-methionine (SAM) to a histidine residue, the reaction is assisted by a reduction system comprising dph-3 and a NADH-dependent reductase. The polypeptide is 2-(3-amino-3-carboxypropyl)histidine synthase subunit 1 (dph-1) (Caenorhabditis elegans).